Consider the following 429-residue polypeptide: Probable M18 family aminopeptidase 2 (429 aa).

The Zn(2+) site is built by histidine 82, histidine 156, and histidine 401.

This sequence belongs to the peptidase M18 family. The cofactor is Zn(2+).

The chain is Probable M18 family aminopeptidase 2 from Ectopseudomonas mendocina (strain ymp) (Pseudomonas mendocina).